Reading from the N-terminus, the 474-residue chain is 3-isopropylmalate dehydratase large subunit (474 aa).

3 residues coordinate [4Fe-4S] cluster: Cys353, Cys414, and Cys417.

Belongs to the aconitase/IPM isomerase family. LeuC type 1 subfamily. Heterodimer of LeuC and LeuD. It depends on [4Fe-4S] cluster as a cofactor.

It carries out the reaction (2R,3S)-3-isopropylmalate = (2S)-2-isopropylmalate. It participates in amino-acid biosynthesis; L-leucine biosynthesis; L-leucine from 3-methyl-2-oxobutanoate: step 2/4. In terms of biological role, catalyzes the isomerization between 2-isopropylmalate and 3-isopropylmalate, via the formation of 2-isopropylmaleate. The chain is 3-isopropylmalate dehydratase large subunit from Teredinibacter turnerae (strain ATCC 39867 / T7901).